The sequence spans 262 residues: Tryptophan synthase alpha chain (262 aa).

Catalysis depends on proton acceptor residues glutamate 49 and aspartate 60.

This sequence belongs to the TrpA family. In terms of assembly, tetramer of two alpha and two beta chains.

It catalyses the reaction (1S,2R)-1-C-(indol-3-yl)glycerol 3-phosphate + L-serine = D-glyceraldehyde 3-phosphate + L-tryptophan + H2O. Its pathway is amino-acid biosynthesis; L-tryptophan biosynthesis; L-tryptophan from chorismate: step 5/5. In terms of biological role, the alpha subunit is responsible for the aldol cleavage of indoleglycerol phosphate to indole and glyceraldehyde 3-phosphate. This chain is Tryptophan synthase alpha chain, found in Thermoanaerobacter sp. (strain X514).